Here is a 127-residue protein sequence, read N- to C-terminus: DNA-directed RNA polymerase subunit omega (127 aa).

This sequence belongs to the RNA polymerase subunit omega family. In terms of assembly, the RNAP catalytic core consists of 2 alpha, 1 beta, 1 beta' and 1 omega subunit. When a sigma factor is associated with the core the holoenzyme is formed, which can initiate transcription.

The catalysed reaction is RNA(n) + a ribonucleoside 5'-triphosphate = RNA(n+1) + diphosphate. Functionally, promotes RNA polymerase assembly. Latches the N- and C-terminal regions of the beta' subunit thereby facilitating its interaction with the beta and alpha subunits. This Rickettsia africae (strain ESF-5) protein is DNA-directed RNA polymerase subunit omega.